The sequence spans 851 residues: Putative cell signaling protein (851 aa).

3 stretches are compositionally biased toward basic and acidic residues: residues K165 to N176, D196 to K223, and S767 to D781. 2 disordered regions span residues K165–K223 and D714–D781.

In terms of processing, palmitoylated.

The protein is Putative cell signaling protein of Schizosaccharomyces pombe (strain 972 / ATCC 24843) (Fission yeast).